The chain runs to 227 residues: GTP:AMP phosphotransferase AK3, mitochondrial (227 aa).

5 residues coordinate GTP: Gly-17, Gly-19, Lys-20, Gly-21, and Thr-22. Lys-20 carries the N6-succinyllysine modification. The residue at position 29 (Lys-29) is an N6-acetyllysine; alternate. The residue at position 29 (Lys-29) is an N6-succinyllysine; alternate. Lys-34 carries the post-translational modification N6-acetyllysine. Residue Ser-37 is modified to Phosphoserine. Residues 37–66 (SSGDLLRQNMLQGTEIAVLAKSFIDQGKLI) are NMP. Residues Ser-38 and Arg-43 each contribute to the AMP site. Lys-57 carries the post-translational modification N6-succinyllysine. Residues Lys-64 and Lys-80 each carry the N6-acetyllysine; alternate modification. 2 positions are modified to N6-succinyllysine; alternate: Lys-64 and Lys-80. Lys-64 provides a ligand contact to AMP. Gly-91, Arg-94, and Gln-98 together coordinate AMP. The tract at residues 127–164 (ARWIHPASGRVYNIEFNPPKTVGIDDLTGEPLIQREDD) is LID. 5 residues coordinate GTP: Arg-128, Tyr-138, Asn-139, Arg-161, and Arg-172. Residues Lys-174 and Lys-189 each carry the N6-acetyllysine; alternate modification. N6-succinyllysine; alternate is present on residues Lys-174 and Lys-189. Thr-201 is a binding site for GTP. N6-acetyllysine is present on Lys-203.

The protein belongs to the adenylate kinase family. AK3 subfamily. In terms of assembly, monomer.

It localises to the mitochondrion matrix. It carries out the reaction a ribonucleoside 5'-triphosphate + AMP = a ribonucleoside 5'-diphosphate + ADP. The catalysed reaction is GTP + AMP = GDP + ADP. The enzyme catalyses ITP + AMP = IDP + ADP. Its function is as follows. Mitochondrial adenylate kinase with a specific GTP:AMP phosphotransferase activity. Could also use ITP as phosphate donor. Its physiological function is to recycle GTP into GDP which is necessary for the TCA cycle in the mitochondrial matrix. In Rattus norvegicus (Rat), this protein is GTP:AMP phosphotransferase AK3, mitochondrial.